A 97-amino-acid chain; its full sequence is MARSVWKGPFVEESLIKKVEKQKLDPKKMPIKTWSRKSTIIPEFIGVSFLIYNGKKFIPVTISEDMVGHKLGEFSPTRTFFGHTPAEKKGKPAEKKK.

Belongs to the universal ribosomal protein uS19 family.

Protein S19 forms a complex with S13 that binds strongly to the 16S ribosomal RNA. The chain is Small ribosomal subunit protein uS19 from Pelagibacter ubique (strain HTCC1062).